Consider the following 415-residue polypeptide: Intron-encoded DNA endonuclease aI3 (415 aa).

The tract at residues 1-81 is COX1 exons 1 to 3 encoded; the sequence is MVQRWLYSTN…MPALIGGFGN (81 aa). A run of 2 helical transmembrane segments spans residues 16–36 and 57–77; these read VLYF…SLII and VLVV…ALIG. Residues 82–415 are COX1 intron 3 encoded; the sequence is QKRYESNNNN…HLKNTYLENK (334 aa).

This sequence in the C-terminal section; belongs to the LAGLIDADG endonuclease family. It depends on Mg(2+) as a cofactor. Post-translationally, the mature protein may arise from proteolytic cleavage of an in-frame translation of some COX1 exons plus the intron containing the aI3 open reading frame.

It is found in the mitochondrion. The protein resides in the membrane. In terms of biological role, mitochondrial DNA endonuclease involved in intron homing. It introduces a specific double-strand break in the DNA of the COX1 gene and thus mediates the insertion of an intron, containing its own coding sequence (group I intron), into an intronless gene. Recognizes with high specificity and cleaves the sequence 5'-GGTTTTGGTAACTATTTATTAC-3'. This is Intron-encoded DNA endonuclease aI3 (AI3) from Saccharomyces cerevisiae (strain ATCC 204508 / S288c) (Baker's yeast).